We begin with the raw amino-acid sequence, 376 residues long: Glucose-1-phosphate adenylyltransferase (376 aa).

Residues Tyr-101, Gly-166, 181–182 (EK), and Ser-192 contribute to the alpha-D-glucose 1-phosphate site.

This sequence belongs to the bacterial/plant glucose-1-phosphate adenylyltransferase family. In terms of assembly, homotetramer.

The enzyme catalyses alpha-D-glucose 1-phosphate + ATP + H(+) = ADP-alpha-D-glucose + diphosphate. It functions in the pathway glycan biosynthesis; glycogen biosynthesis. In terms of biological role, involved in the biosynthesis of ADP-glucose, a building block required for the elongation reactions to produce glycogen. Catalyzes the reaction between ATP and alpha-D-glucose 1-phosphate (G1P) to produce pyrophosphate and ADP-Glc. In Bacillus cereus (strain ATCC 10987 / NRS 248), this protein is Glucose-1-phosphate adenylyltransferase.